Consider the following 244-residue polypeptide: MGHKVHPTGIRLGIAKDWNSKWYANKAEFASYLAADLKVREMLRKKLAQAGVSKILIERPAKTARVTIHTARPGVVIGKRGEDIEKLRKEVSQLMGVPAHINVTEVRKPELDAQLVAESIAQQLERRIMFRRAMKRSVGNAMRLGALGIKVNVAGRLNGAEIARSEWYREGRVPLHTLRADIDYGFAEASTTYGIIGIKVWIYKGEVFDFSQVGQEKQDDSPRNDRNDRGDRGDRPSRPAREAR.

The region spanning 39 to 107 (VREMLRKKLA…PAHINVTEVR (69 aa)) is the KH type-2 domain. Residues 213–244 (VGQEKQDDSPRNDRNDRGDRGDRPSRPAREAR) are disordered. The segment covering 216 to 244 (EKQDDSPRNDRNDRGDRGDRPSRPAREAR) has biased composition (basic and acidic residues).

Belongs to the universal ribosomal protein uS3 family. In terms of assembly, part of the 30S ribosomal subunit. Forms a tight complex with proteins S10 and S14.

Functionally, binds the lower part of the 30S subunit head. Binds mRNA in the 70S ribosome, positioning it for translation. This chain is Small ribosomal subunit protein uS3, found in Xanthomonas euvesicatoria pv. vesicatoria (strain 85-10) (Xanthomonas campestris pv. vesicatoria).